Here is a 714-residue protein sequence, read N- to C-terminus: Delta-like protein 1 (714 aa).

An N-terminal signal peptide occupies residues 1-17 (MGRRSALALAVVSALLC). At 18–537 (QVWSSGVFEL…VAAQGGSFPW (520 aa)) the chain is on the extracellular side. Residues 176–220 (FVCDEHYYGEGCSVFCRPRDDAFGHFTCGERGEKMCDPGWKGQYC) enclose the DSL domain. 27 disulfide bridges follow: Cys-178/Cys-187, Cys-191/Cys-203, Cys-211/Cys-220, Cys-225/Cys-236, Cys-229/Cys-242, Cys-244/Cys-253, Cys-256/Cys-267, Cys-262/Cys-273, Cys-275/Cys-284, Cys-291/Cys-303, Cys-297/Cys-313, Cys-315/Cys-324, Cys-331/Cys-342, Cys-336/Cys-351, Cys-353/Cys-362, Cys-369/Cys-380, Cys-374/Cys-390, Cys-392/Cys-401, Cys-408/Cys-419, Cys-413/Cys-428, Cys-430/Cys-439, Cys-446/Cys-457, Cys-451/Cys-466, Cys-468/Cys-477, Cys-484/Cys-495, Cys-489/Cys-504, and Cys-506/Cys-515. 3 consecutive EGF-like domains span residues 225-253 (CLPG…GRYC), 256-284 (CIRY…GLFC), and 291-324 (CTHH…GANC). An EGF-like 4; calcium-binding domain is found at 331–362 (CAPSPCRNGGSCTDLEDSYSCTCPPGFYGKVC). 2 EGF-like domains span residues 369 to 401 (CADG…GFNC) and 408 to 439 (CSSS…GRYC). The EGF-like 7; calcium-binding domain maps to 446-477 (CASSPCANGGTCRDSVNDFSCTCPPGYTGRNC). A glycan (N-linked (GlcNAc...) asparagine) is linked at Asn-476. Positions 484-515 (CEHAPCHNGATCHQRGQRYMCECAQGYGGANC) constitute an EGF-like 8 domain. The helical transmembrane segment at 538-560 (VAVCAGVVLVLLLLLGCAAVVVC) threads the bilayer. The Cytoplasmic segment spans residues 561 to 714 (VRLKLQKHQP…KDECVIATEV (154 aa)). Residue Lys-605 forms a Glycyl lysine isopeptide (Lys-Gly) (interchain with G-Cter in ubiquitin) linkage. Position 630 is a phosphothreonine (Thr-630). Positions 644 to 656 (ATVRDAHSKRDTK) are enriched in basic and acidic residues. Positions 644–690 (ATVRDAHSKRDTKCQSQGSVGEEKSTSTLRGGEVPDRKRPESVYSTS) are disordered. Ser-685 carries the phosphoserine; by PKB modification. Phosphoserine is present on Ser-688. The segment at 711–714 (ATEV) is interaction with MAGI1.

In terms of assembly, homodimer. Interacts with TJP1. Interacts with MAGI1 (via PDZ domain); forms a complex with CTNNB1 and CDH2 and promotes recruitment to the adherens junction and stabilization on the cell surface. Interacts with PSEN1; undergoes a presenilin-dependent gamma-secretase cleavage that releases a Dll1-intracellular form. Interacts with MFAP5. Interacts with MIB1. Interacts with NEURL1B; leads to ubiquitination. Interacts with NEURL1. Interacts with SYNJ2BP; enhances DLL1 protein stability, and promotes Notch signaling in endothelial cells. Interacts with MAGI1, MAGI2, MAGI3 and MPDZ. Interacts (via ubiquitin) with EPN1 (via IUM domain); binding with NOTCH1 attached to neighboring cell, promotes ligand ubiquitination and EPN1 interaction, leading to NECD transendocytosis and Notch signaling. Interacts with NOTCH1. Ubiquitinated by MIB (MIB1 or MIB2), leading to its endocytosis and subsequent degradation. Ubiquitinated; promotes recycling back to the plasma membrane and confers a strong affinity for NOTCH1. Mono- and multi-ubiquitinated. Multi-ubiquitination of Lys-605 by MIB1 promotes both cis and trans-interaction with NOTCH1, as well as activation of Notch signaling. Ubiquitinated by NEURL1B. Post-translationally, phosphorylated in a membrane association-dependent manner. Phosphorylation at Ser-688 requires the presence of Ser-685, whereas phosphorylation at Thr-630 and Ser-685 occur independently of the other sites. Phosphorylation is required for full ligand activity in vitro and affects surface presentation, ectodomain shedding, and endocytosis. In terms of processing, O-fucosylated. Can be elongated to a disaccharide by MFNG.

Its subcellular location is the apical cell membrane. The protein resides in the cell junction. It localises to the adherens junction. The protein localises to the membrane raft. Its function is as follows. Transmembrane ligand protein of NOTCH1, NOTCH2 and NOTCH3 receptors that binds the extracellular domain (ECD) of Notch receptor in a cis and trans fashion manner. Following transinteraction, ligand cells produce mechanical force that depends of a clathrin-mediated endocytosis, requiring ligand ubiquitination, EPN1 interaction, and actin polymerisation; these events promote Notch receptor extracellular domain (NECD) transendocytosis and triggers Notch signaling through induction of cleavage, hyperphosphorylation, and nuclear accumulation of the intracellular domain of Notch receptors (NICD). Is required for embryonic development and maintenance of adult stem cells in many different tissues and immune systeme; the DLL1-induced Notch signaling is mediated through an intercellular communication that regulates cell lineage, cell specification, cell patterning and morphogenesis through effects on differentiation and proliferation. Plays a role in brain development at different level, namely by regulating neuronal differentiation of neural precursor cells via cell-cell interaction, most likely through the lateral inhibitory system in an endogenous level dependent-manner. During neocortex development, Dll1-Notch signaling transmission is mediated by dynamic interactions between intermediate neurogenic progenitors and radial glia; the cell-cell interactions are mediated via dynamic and transient elongation processes, likely to reactivate/maintain Notch activity in neighboring progenitors, and coordinate progenitor cell division and differentiation across radial and zonal boundaries. During cerebellar development, regulates Bergmann glial monolayer formation and its morphological maturation through a Notch signaling pathway. At the retina and spinal cord level, regulates neurogenesis by preventing the premature differentiation of neural progenitors and also by maintaining progenitors in spinal cord through Notch signaling pathway. Also controls neurogenesis of the neural tube in a progenitor domain-specific fashion along the dorsoventral axis. Maintains quiescence of neural stem cells and plays a role as a fate determinant that segregates asymmetrically to one daughter cell during neural stem cells mitosis, resulting in neuronal differentiation in Dll1-inheriting cell. Plays a role in immune systeme development, namely the development of all T-cells and marginal zone (MZ) B cells. Blocks the differentiation of progenitor cells into the B-cell lineage while promoting the emergence of a population of cells with the characteristics of a T-cell/NK-cell precursor. Also plays a role during muscle development. During early development, inhibits myoblasts differentiation from the medial dermomyotomal lip and later regulates progenitor cell differentiation. Directly modulates cell adhesion and basal lamina formation in satellite cells through Notch signaling. Maintains myogenic progenitors pool by suppressing differentiation through down-regulation of MYOD1 and is required for satellite cell homing and PAX7 expression. During craniofacial and trunk myogenesis suppresses differentiation of cranial mesoderm-derived and somite-derived muscle via MYOD1 regulation but in cranial mesoderm-derived progenitors, is neither required for satellite cell homing nor for PAX7 expression. Also plays a role during pancreatic cell development. During type B pancreatic cell development, may be involved in the initiation of proximodistal patterning in the early pancreatic epithelium. Stimulates multipotent pancreatic progenitor cells proliferation and pancreatic growth by maintaining HES1 expression and PTF1A protein levels. During fetal stages of development, is required to maintain arterial identity and the responsiveness of arterial endothelial cells for VEGFA through regulation of KDR activation and NRP1 expression. Controls sprouting angiogenesis and subsequent vertical branch formation through regulation on tip cell differentiation. Negatively regulates goblet cell differentiation in intestine and controls secretory fat commitment through lateral inhibition in small intestine. Plays a role during inner ear development; negatively regulates auditory hair cell differentiation. Plays a role during nephron development through Notch signaling pathway. Regulates growth, blood pressure and energy homeostasis. The sequence is that of Delta-like protein 1 (Dll1) from Rattus norvegicus (Rat).